Consider the following 1272-residue polypeptide: MPNEDNELQKAIENHHNQLLNQDKENADRNGSVIEDLPLYGTSINQQSTPGDVDDGKHLLYPDIATNLPLKTSDRLLDDILCDTIFLNSTDPKVMQKGLQSRGILKESMLSYSTFRSSIRPNCLGSLTDQVVFQTKSEYDSISCPKYNKIHVFQAVIFNPSLAEQQISTFDDIVKIPIYHLKVSVKVRQELERLKKHVGVTQFHSLDHLHEYDRVDLSTFDSSDPNLLDYGIYVSDDTNKLILIEIFKPEFNSPEEHESFTADAIKKRYNAMCVKNESLDKSETPSQVDCFYTLFKIFKGPLTRKSKAEPTKTIDSGNLALNTHLNPEWLTSKYGFQASSEIDEETNEIFTEYVPPDMVDYVNDLETRKIRESFVRKCLQLIFWGQLSTSLLAPNSPLKNTKSVKGMSSLQTSFSTLPWFHLLGESRARILLNSNEQTHSPLDAEPHFINLSVSHYYTDRDIIRNYESLSSLDPENIGLYFDALTYIANRKGAYQLIAYCGKQDIIGQEALENALLMFKINPKECNISELNEATLLSIYKYETSNKSQVTSNHLTNLKNALRLLAKYTKSDKLKFYVDHEPYRALSQAYDTLSIDESVDEDIIKTAYSVKINDSPGLKLDCDRALYTIAISKRSLDLFNFLTEECPQFSNYYGPEKLDYQEALKLLQVNENASDETILKIFKQKWFDENVYEPDQFLILRAALTKISIERNSTLITNFLLTGTIDPNSLPPENWPTGINNIGNTCYLNSLLQYYFSIAPLRRYVLEYQKTVENFNDHLSNSGHIRRIGGREISRGEVERSIQFIYQLRNLFYAMVHTRERCVTPSKELAYLAFAPSNVEVEFEVEGNKVVDQTGVLSDSKKETTDDAFTTKIKDTSLIDLEMEDGLNGDVGTDANRKKNESNDAEVSENEDTTGLTSPTRVAKISSDQLENALEMGRQQDVTECIGNVLFQIESGSEPIRYDEDNEQYDLVKQLFYGTTKQSIVPLSATNKVRTKVERFLSLLINIGDHPKDIYDAFDSYFKDEYLTMEEYGDVIRTVAVTTFPTILQVQIQRVYYDRERLMPFKSIEPLPFKEVIYMDRYADTENPLLLAKKKETEEMKQKLKVMKNRQRELLSRDDSGLTRKDAFLESIKLLESDTIKKTPLKIEAANDVIKTLRNNVQNIDNELMKLYNDINSLEEKISHQFDDFKEYGYSLFSVFIHRGEASYGHYWIYIKDRNRNGIWRKYNDETISEVQEEEVFNFNEGNTATPYFLVYVKQGQEGDIEPLKRILK.

Residues 736–1258 (TGINNIGNTC…TPYFLVYVKQ (523 aa)) enclose the USP domain. Cysteine 745 acts as the Nucleophile in catalysis. A disordered region spans residues 884–918 (DGLNGDVGTDANRKKNESNDAEVSENEDTTGLTSP). Acidic residues predominate over residues 902-911 (NDAEVSENED). Serine 907 carries the phosphoserine modification. Catalysis depends on histidine 1209, which acts as the Proton acceptor.

The protein belongs to the peptidase C19 family. As to quaternary structure, forms a ternary complex with RSP5 and RUP1. Interacts with RSP5. Interacts with FZO1.

It carries out the reaction Thiol-dependent hydrolysis of ester, thioester, amide, peptide and isopeptide bonds formed by the C-terminal Gly of ubiquitin (a 76-residue protein attached to proteins as an intracellular targeting signal).. In terms of biological role, has an ATP-independent isopeptidase activity, cleaving at the C-terminus of the ubiquitin moiety in natural or engineered linear fusion proteins, irrespective of their size or the presence of an N-terminal extension to ubiquitin. Hydrolyzes polyubiquitinated 'Lys-63' polyubiquitin chains in RPO21, producing mono-ubiquitinated RNA polymerase II. Removes ubiquitin chains that initiate proteolysis of FZO1 and inhibit mitochondrial fusion. The polypeptide is Ubiquitin carboxyl-terminal hydrolase 2 (UBP2) (Saccharomyces cerevisiae (strain ATCC 204508 / S288c) (Baker's yeast)).